We begin with the raw amino-acid sequence, 61 residues long: Large ribosomal subunit protein uL30 (61 aa).

This sequence belongs to the universal ribosomal protein uL30 family. As to quaternary structure, part of the 50S ribosomal subunit.

In Lactobacillus acidophilus (strain ATCC 700396 / NCK56 / N2 / NCFM), this protein is Large ribosomal subunit protein uL30.